Here is a 239-residue protein sequence, read N- to C-terminus: Leucine rich adaptor protein 1 (239 aa).

2 LRR repeats span residues leucine 55–leucine 83 and leucine 93–leucine 114. Positions serine 105–glycine 116 are enriched in low complexity. The segment at serine 105–arginine 138 is disordered. Residues serine 118, serine 126, and serine 129 each carry the phosphoserine modification.

In terms of assembly, forms a tripartite complex with CDC42BPA/CDC42BPB and MYO18A acting as an adapter connecting both. Its binding to CDC42BPA/CDC42BPB results in their activation by abolition of their negative autoregulation. Interacts with CDC42BPA and CDC42BPB. Post-translationally, phosphorylated.

Its subcellular location is the cytoplasm. Its function is as follows. Acts as an activator of the canonical NF-kappa-B pathway and drive the production of pro-inflammatory cytokines. Promotes the antigen (Ag)-presenting and priming function of dendritic cells via the canonical NF-kappa-B pathway. In concert with MYO18A and CDC42BPA/CDC42BPB, is involved in modulating lamellar actomyosin retrograde flow that is crucial to cell protrusion and migration. Activates CDC42BPA/CDC42BPB and targets it to actomyosin through its interaction with MYO18A, leading to MYL9/MLC2 phosphorylation and MYH9/MYH10-dependent actomyosin assembly in the lamella. The sequence is that of Leucine rich adaptor protein 1 (Lurap1) from Mus musculus (Mouse).